Consider the following 245-residue polypeptide: Carbohydrate deacetylase (245 aa).

The Mg(2+) site is built by histidine 59 and histidine 121.

The protein belongs to the YdjC deacetylase family. As to quaternary structure, homodimer. Mg(2+) serves as cofactor.

Probably catalyzes the deacetylation of acetylated carbohydrates an important step in the degradation of oligosaccharides. This Clostridium beijerinckii (strain ATCC 51743 / NCIMB 8052) (Clostridium acetobutylicum) protein is Carbohydrate deacetylase.